Reading from the N-terminus, the 350-residue chain is Biotin synthase (350 aa).

Residues 41–268 (NEVQVSRLLS…KSRVRLSAGR (228 aa)) form the Radical SAM core domain. [4Fe-4S] cluster-binding residues include cysteine 56, cysteine 60, and cysteine 63. [2Fe-2S] cluster is bound by residues cysteine 100, cysteine 131, cysteine 191, and arginine 263.

This sequence belongs to the radical SAM superfamily. Biotin synthase family. Homodimer. Requires [4Fe-4S] cluster as cofactor. [2Fe-2S] cluster serves as cofactor.

The enzyme catalyses (4R,5S)-dethiobiotin + (sulfur carrier)-SH + 2 reduced [2Fe-2S]-[ferredoxin] + 2 S-adenosyl-L-methionine = (sulfur carrier)-H + biotin + 2 5'-deoxyadenosine + 2 L-methionine + 2 oxidized [2Fe-2S]-[ferredoxin]. It participates in cofactor biosynthesis; biotin biosynthesis; biotin from 7,8-diaminononanoate: step 2/2. In terms of biological role, catalyzes the conversion of dethiobiotin (DTB) to biotin by the insertion of a sulfur atom into dethiobiotin via a radical-based mechanism. The sequence is that of Biotin synthase from Shewanella pealeana (strain ATCC 700345 / ANG-SQ1).